The chain runs to 466 residues: 3-isopropylmalate dehydratase large subunit (466 aa).

[4Fe-4S] cluster contacts are provided by C347, C407, and C410.

Belongs to the aconitase/IPM isomerase family. LeuC type 1 subfamily. As to quaternary structure, heterodimer of LeuC and LeuD. It depends on [4Fe-4S] cluster as a cofactor.

The enzyme catalyses (2R,3S)-3-isopropylmalate = (2S)-2-isopropylmalate. The protein operates within amino-acid biosynthesis; L-leucine biosynthesis; L-leucine from 3-methyl-2-oxobutanoate: step 2/4. Catalyzes the isomerization between 2-isopropylmalate and 3-isopropylmalate, via the formation of 2-isopropylmaleate. The protein is 3-isopropylmalate dehydratase large subunit of Klebsiella pneumoniae subsp. pneumoniae (strain ATCC 700721 / MGH 78578).